Here is a 352-residue protein sequence, read N- to C-terminus: Beta-1,4-xylanase (352 aa).

Positions 1–23 (MINQRFSILVLLLILLTFSLGFL) are cleaved as a signal peptide. One can recognise a GH10 domain in the interval 29–352 (GMEIPSLKEV…KKAFWEIVKF (324 aa)). Glu-155 acts as the Proton donor in catalysis. Catalysis depends on Glu-262, which acts as the Nucleophile.

This sequence belongs to the glycosyl hydrolase 10 (cellulase F) family.

The protein localises to the secreted. The catalysed reaction is Endohydrolysis of (1-&gt;4)-beta-D-xylosidic linkages in xylans.. The protein operates within glycan degradation; xylan degradation. This chain is Beta-1,4-xylanase (xynA), found in Dictyoglomus thermophilum.